The following is a 120-amino-acid chain: ATP-dependent Clp protease adapter protein ClpS (120 aa).

This sequence belongs to the ClpS family. Binds to the N-terminal domain of the chaperone ClpA.

In terms of biological role, involved in the modulation of the specificity of the ClpAP-mediated ATP-dependent protein degradation. This chain is ATP-dependent Clp protease adapter protein ClpS, found in Azotobacter vinelandii (strain DJ / ATCC BAA-1303).